A 1850-amino-acid chain; its full sequence is MPDSITNGGRPPAPPSSVSSTTASTTGNFGTRRRLVNRIKKVDELHPAQENPTMGSHWLSEQERSRLEAVQQDWRRTRPMKFQWTSKKRPDDPTTSSPSTVSISNALENSTPSLNNVSSITNSSSPFSLSSAATSTASAIIPFTSNVATNHPHLNHHVSRIPQAIVTGGTNGSLPPLLISPTSAAAATPLISGKAGPMSPSTGSPINVAATVLQNAVSSPQHSIFDRSRLNKIPPNTSLASSSSPSDAANNDKPIQQRHSILSNVRTLTQAMVNDGPRTLTGDDMDKMVSEEERARKEQEKREEEEKAARRIDVEDDFDAQEKPIDKSKNGRFLKFDEELGRGSFKTVFRGLDTETGVAVAWCELQESKLNKTERQRFREEAEMLKDLQHPNIVRFYDYWESADLCGKRKYIVLVTELMTSGTLKMYLKRFKRINIKVLKSWCRQILKGLSFLHTRNPPVIHRDLKCDNIFITGTTGSVKIGDLGLATLKNKSFAKSVIGTPEFMAPEMYEEMYDESVDVYAFGMCLLEMVTGEYPYSECMNPATIYRKVISGVKPECFSRIPAQYPEIREIIDRCIRVRREERSTVKQLLVDDFFTPEDLIGIRVEIKNRDADLNDLNVEIQMQLRVYDEKKRKQYRFKENEGLQFAFDIENDSPDEVVQQMIEQQHIPDEDTRMITKLIKDKVDAFRRDRDHRLLEIKRAKEEEERIREEAEIKEELRLRAEAKEKEKERLEKERLEKKAAAAAAANPNPTPIPPTPATPHSSAQQQPIPPPLSTQTSAEIQQSAQQPSVPVTMIANIPAMSPTSAQPQPVLSPTSAAVPVPTTMIHVPKPSEIPVQNVATTAAPVAANNVPPSPAPFKTEDIQTPTLAQNTVPRTISTDASGLVINTPASIASPSPAPSATDVASTTAPVTPAPTPTTTTDGGAAAASTTTENKEEKRKSNKRKVVMEILGCDESRNFALVSCRLDTSHKSVTFQFAPGTDKPCTIATKLLAEDCLLKVHVHIVEAQLGEVIQLINSDGKKGVGTKLATVLDPNSTEPPTITAVMPKDSSAATASNTKPKIEIEKTPPTRDASQEPNNVQVTNVRKVSQESNAESVQSIPRPGGIIVMSPTNQTDSAPPPTGAAAKPSRFQVTKSADPIATPISSSISTATVIPIVAATPTNITSEPVIVQPITAQVITHLATPSPVSHSLSSNSSPSATTHSNMSSIQSTTSVPGRRFTVQPVSQAESGISSSISTPHPEPTPAITSCPPPVPSVPPVVSNGTLNLEVAPKQTPSATNQNVDTQHSSSTASTATLVSETPATVHVTPISVPAPVQEPLVIDHHSDVLTQLDSELRKCFQVSGVSHSASPSTVVESLTSMTPQTIPLACQTVPASIGQAPAVIAAAHAASLIPNASVPQSPSRLDAETGLAGLHEKLEALKMEQDRREDMGDDAIGTTTTDGKDEIPIDTLKGLAEALGKVIHADGRETTPMPPDHPDLTDASTQQLISPSNPDVLTTMSSAVEGSASSTMIEDIDASTSAVDASMMNSMPPGAQNSTDQIPAAMTLSMDQECAQSMTSSITRNTTGTKLATFENLETALSSTLGTHIRQPNAPSSRDETTAPMTPSFTNERIGGGGGGGATSFSIGTPPSHSPFPVSECDYDLKGQMDLESEDPEVIQMIVRHRMEQHKLLEKQRVEIERLRSKIRVPRATSVNPEMIGDDEADTTLTALQSALGNASLSLPASPPPNTEIPDNEGQHHCNSFRCIGDPNDNVSIVNQIKQRLGIIPSSRQSVRSATSSSPSTPPSSSSAPPKSLSSPTKSYVSHCSLSIGYGSTASSEQQQREPSPSATTSSFLSDPATGVIENV.

3 disordered regions span residues 1–108 (MPDS…NALE), 221–253 (QHSIFDRSRLNKIPPNTSLASSSSPSDAANNDK), and 272–309 (MVNDGPRTLTGDDMDKMVSEEERARKEQEKREEEEKAA). Composition is skewed to low complexity over residues 16 to 26 (SSVSSTTASTT) and 234 to 251 (PPNTSLASSSSPSDAANN). The span at 284–309 (DMDKMVSEEERARKEQEKREEEEKAA) shows a compositional bias: basic and acidic residues. The Protein kinase domain maps to 334–596 (LKFDEELGRG…VKQLLVDDFF (263 aa)). Residues S344, 416–419 (TELM), and K466 each bind ATP. D483 serves as the catalytic Proton acceptor. Residues 693-749 (DHRLLEIKRAKEEEERIREEAEIKEELRLRAEAKEKEKERLEKERLEKKAAAAAAAN) are a coiled coil. Residues 727–742 (EKEKERLEKERLEKKA) are compositionally biased toward basic and acidic residues. Disordered stretches follow at residues 727–790 (EKEK…AQQP), 890–943 (TPAS…KRKS), 1040–1130 (EPPT…AAKP), 1188–1249 (SPVS…TPAI), 1588–1636 (GTHI…PSHS), 1721–1740 (ASLSLPASPPPNTEIPDNEG), and 1769–1850 (IIPS…IENV). A compositionally biased stretch (pro residues) spans 751–760 (NPTPIPPTPA). Polar residues predominate over residues 776-790 (STQTSAEIQQSAQQP). Positions 890–934 (TPASIASPSPAPSATDVASTTAPVTPAPTPTTTTDGGAAAASTTT) are enriched in low complexity. The span at 1062–1071 (PKIEIEKTPP) shows a compositional bias: basic and acidic residues. A compositionally biased stretch (polar residues) spans 1077-1101 (QEPNNVQVTNVRKVSQESNAESVQS). The segment covering 1188 to 1207 (SPVSHSLSSNSSPSATTHSN) has biased composition (low complexity). Positions 1208-1217 (MSSIQSTTSV) are enriched in polar residues. The segment covering 1771 to 1805 (PSSRQSVRSATSSSPSTPPSSSSAPPKSLSSPTKS) has biased composition (low complexity). A compositionally biased stretch (polar residues) spans 1806-1820 (YVSHCSLSIGYGSTA). Positions 1821-1832 (SSEQQQREPSPS) are enriched in low complexity.

This sequence belongs to the protein kinase superfamily. Ser/Thr protein kinase family. WNK subfamily. In terms of assembly, interacts with gck-3 (via C-terminus). It depends on Mg(2+) as a cofactor. As to expression, expressed in pharynx, nervous system, hypodermis, spermatheca, excretory cell and canal and body wall muscles.

The protein localises to the cytoplasm. It carries out the reaction L-seryl-[protein] + ATP = O-phospho-L-seryl-[protein] + ADP + H(+). The catalysed reaction is L-threonyl-[protein] + ATP = O-phospho-L-threonyl-[protein] + ADP + H(+). Activated in response to hyperosmotic stress: cell shrinkage promotes formation of a membraneless compartment that concentrates wnk-1 with its downstrem substrates. In terms of biological role, serine/threonine-protein kinase component of the WNK3-SPAK/OSR1 kinase cascade, which plays an important role in the regulation of electrolyte homeostasis and regulatory volume increase in response to hyperosmotic stress. Wnk-1 mediates regulatory volume increase in response to hyperosmotic stress by acting as a molecular crowding sensor, which senses cell shrinkage and mediates formation of a membraneless compartment by undergoing liquid-liquid phase separation. The membraneless compartment concentrates wnk-1 with its substrates. Phosphorylates gck-3. Plays a role in osmotic stress responses during which it increases gpdh-1 translation, likely by phosphorylating gck-3. Essential for larval development and the tubular formation of the excretory canals. This chain is Serine/threonine-protein kinase WNK, found in Caenorhabditis elegans.